Here is a 181-residue protein sequence, read N- to C-terminus: Probable cobalt-precorrin-6B C(15)-methyltransferase (decarboxylating) (181 aa).

Residues T16, G40–G44, D61, and A89 each bind S-adenosyl-L-methionine.

Belongs to the methyltransferase superfamily. Archaeal-type CbiT family.

The enzyme catalyses Co-precorrin-6B + S-adenosyl-L-methionine = Co-precorrin-7 + S-adenosyl-L-homocysteine + CO2. It participates in cofactor biosynthesis; adenosylcobalamin biosynthesis; cob(II)yrinate a,c-diamide from sirohydrochlorin (anaerobic route): step 8/10. In terms of biological role, catalyzes the methylation of C-15 in cobalt-precorrin-6B followed by the decarboxylation of C-12 to form cobalt-precorrin-7. This Methanococcus maripaludis (strain C5 / ATCC BAA-1333) protein is Probable cobalt-precorrin-6B C(15)-methyltransferase (decarboxylating).